A 199-amino-acid chain; its full sequence is GTP cyclohydrolase-2 (199 aa).

A GTP-binding site is contributed by 49–53 (RIHSE). Positions 54, 65, and 67 each coordinate Zn(2+). GTP-binding positions include glutamine 70, 92 to 94 (EGR), and threonine 114. Aspartate 126 (proton acceptor) is an active-site residue. The active-site Nucleophile is the arginine 128. GTP contacts are provided by threonine 149 and lysine 154.

It belongs to the GTP cyclohydrolase II family. As to quaternary structure, homodimer. Zn(2+) serves as cofactor.

The enzyme catalyses GTP + 4 H2O = 2,5-diamino-6-hydroxy-4-(5-phosphoribosylamino)-pyrimidine + formate + 2 phosphate + 3 H(+). It functions in the pathway cofactor biosynthesis; riboflavin biosynthesis; 5-amino-6-(D-ribitylamino)uracil from GTP: step 1/4. In terms of biological role, catalyzes the conversion of GTP to 2,5-diamino-6-ribosylamino-4(3H)-pyrimidinone 5'-phosphate (DARP), formate and pyrophosphate. In Proteus mirabilis (strain HI4320), this protein is GTP cyclohydrolase-2.